The following is a 118-amino-acid chain: MSITSLKNQKEFELINKLGKKFHERYFILVIAKKLPKIFLESKYNTFLGIKVSRKLNKKAVVRNKIKRRIRHLIRIIVSDSKLKAIKFAMIIIPRKGFEEINFSHLNCELSKIILRNI.

This sequence belongs to the RnpA family. In terms of assembly, consists of a catalytic RNA component (M1 or rnpB) and a protein subunit.

It carries out the reaction Endonucleolytic cleavage of RNA, removing 5'-extranucleotides from tRNA precursor.. RNaseP catalyzes the removal of the 5'-leader sequence from pre-tRNA to produce the mature 5'-terminus. It can also cleave other RNA substrates such as 4.5S RNA. The protein component plays an auxiliary but essential role in vivo by binding to the 5'-leader sequence and broadening the substrate specificity of the ribozyme. The protein is Ribonuclease P protein component of Rickettsia felis (strain ATCC VR-1525 / URRWXCal2) (Rickettsia azadi).